The primary structure comprises 245 residues: tRNA pseudouridine synthase A (245 aa).

The active-site Nucleophile is the Asp-52. Tyr-111 contributes to the substrate binding site.

It belongs to the tRNA pseudouridine synthase TruA family. In terms of assembly, homodimer.

It catalyses the reaction uridine(38/39/40) in tRNA = pseudouridine(38/39/40) in tRNA. In terms of biological role, formation of pseudouridine at positions 38, 39 and 40 in the anticodon stem and loop of transfer RNAs. The polypeptide is tRNA pseudouridine synthase A (Rickettsia africae (strain ESF-5)).